The chain runs to 473 residues: Ribulose bisphosphate carboxylase large chain (473 aa).

Substrate is bound by residues asparagine 116 and threonine 166. Lysine 168 functions as the Proton acceptor in the catalytic mechanism. Lysine 170 is a substrate binding site. Mg(2+) contacts are provided by lysine 194, aspartate 196, and glutamate 197. Lysine 194 carries the N6-carboxylysine modification. Histidine 287 functions as the Proton acceptor in the catalytic mechanism. Arginine 288, histidine 320, and serine 372 together coordinate substrate.

It belongs to the RuBisCO large chain family. Type I subfamily. As to quaternary structure, heterohexadecamer of 8 large chains and 8 small chains. Mg(2+) serves as cofactor.

It carries out the reaction 2 (2R)-3-phosphoglycerate + 2 H(+) = D-ribulose 1,5-bisphosphate + CO2 + H2O. It catalyses the reaction D-ribulose 1,5-bisphosphate + O2 = 2-phosphoglycolate + (2R)-3-phosphoglycerate + 2 H(+). RuBisCO catalyzes two reactions: the carboxylation of D-ribulose 1,5-bisphosphate, the primary event in carbon dioxide fixation, as well as the oxidative fragmentation of the pentose substrate. Both reactions occur simultaneously and in competition at the same active site. The protein is Ribulose bisphosphate carboxylase large chain of Cupriavidus metallidurans (strain ATCC 43123 / DSM 2839 / NBRC 102507 / CH34) (Ralstonia metallidurans).